We begin with the raw amino-acid sequence, 525 residues long: GMP synthase [glutamine-hydrolyzing] (525 aa).

The Glutamine amidotransferase type-1 domain maps to 9-207 (KILILDFGSQ…IVDICGCDTL (199 aa)). Catalysis depends on C86, which acts as the Nucleophile. Catalysis depends on residues H181 and E183. The GMPS ATP-PPase domain occupies 208-400 (WTPANIAQDA…LGLPYDMVYR (193 aa)). Residue 235-241 (SGGVDSS) participates in ATP binding.

As to quaternary structure, homodimer.

The catalysed reaction is XMP + L-glutamine + ATP + H2O = GMP + L-glutamate + AMP + diphosphate + 2 H(+). It functions in the pathway purine metabolism; GMP biosynthesis; GMP from XMP (L-Gln route): step 1/1. Functionally, catalyzes the synthesis of GMP from XMP. This Marinomonas sp. (strain MWYL1) protein is GMP synthase [glutamine-hydrolyzing].